Consider the following 430-residue polypeptide: Histidine--tRNA ligase (430 aa).

It belongs to the class-II aminoacyl-tRNA synthetase family. Homodimer.

It is found in the cytoplasm. It carries out the reaction tRNA(His) + L-histidine + ATP = L-histidyl-tRNA(His) + AMP + diphosphate + H(+). This Acinetobacter baumannii (strain SDF) protein is Histidine--tRNA ligase.